A 224-amino-acid polypeptide reads, in one-letter code: Biosynthetic peptidoglycan transglycosylase (224 aa).

The chain crosses the membrane as a helical span at residues 12–32 (ILVVLAILPVFLLLVYSLPFV).

This sequence belongs to the glycosyltransferase 51 family.

It is found in the cell inner membrane. The catalysed reaction is [GlcNAc-(1-&gt;4)-Mur2Ac(oyl-L-Ala-gamma-D-Glu-L-Lys-D-Ala-D-Ala)](n)-di-trans,octa-cis-undecaprenyl diphosphate + beta-D-GlcNAc-(1-&gt;4)-Mur2Ac(oyl-L-Ala-gamma-D-Glu-L-Lys-D-Ala-D-Ala)-di-trans,octa-cis-undecaprenyl diphosphate = [GlcNAc-(1-&gt;4)-Mur2Ac(oyl-L-Ala-gamma-D-Glu-L-Lys-D-Ala-D-Ala)](n+1)-di-trans,octa-cis-undecaprenyl diphosphate + di-trans,octa-cis-undecaprenyl diphosphate + H(+). It functions in the pathway cell wall biogenesis; peptidoglycan biosynthesis. Peptidoglycan polymerase that catalyzes glycan chain elongation from lipid-linked precursors. This chain is Biosynthetic peptidoglycan transglycosylase, found in Brucella suis biovar 1 (strain 1330).